The sequence spans 147 residues: Echinoidin (147 aa).

One can recognise a C-type lectin domain in the interval 1 to 143 (GCCPTFWTSF…STRHYLICKL (143 aa)). Cystine bridges form between Cys-3/Cys-14, Cys-31/Cys-141, and Cys-116/Cys-132. Ser-38 is a glycosylation site (O-linked (Hex) serine). The Cell attachment site signature appears at 39–41 (RGD).

As to quaternary structure, homodimer; disulfide-linked. The identity of the saccharide is not reported in PubMed:3571253, and it is unlikely to be N-acetylgalactosamine. The sugar attached to Ser-38 is represented simply as Hex. As to expression, coelemic fluid.

The protein localises to the secreted. Role in the defense system of the organism against microorganisms. This lectin is specific for Gal-GalNAc. The polypeptide is Echinoidin (Heliocidaris crassispina (Sea urchin)).